Reading from the N-terminus, the 452-residue chain is Translation initiation factor eIF2B subunit gamma (452 aa).

Met1 carries the post-translational modification N-acetylmethionine. At Ser261 the chain carries Phosphoserine.

Belongs to the eIF-2B gamma/epsilon subunits family. Component of the translation initiation factor 2B (eIF2B) complex which is a heterodecamer of two sets of five different subunits: alpha, beta, gamma, delta and epsilon. Subunits alpha, beta and delta comprise a regulatory subcomplex and subunits epsilon and gamma comprise a catalytic subcomplex. Within the complex, the hexameric regulatory complex resides at the center, with the two heterodimeric catalytic subcomplexes bound on opposite sides.

The protein localises to the cytoplasm. It localises to the cytosol. With respect to regulation, activated by the chemical integrated stress response (ISR) inhibitor ISRIB which stimulates guanine nucleotide exchange factor activity for both phosphorylated and unphosphorylated eIF2. Functionally, acts as a component of the translation initiation factor 2B (eIF2B) complex, which catalyzes the exchange of GDP for GTP on the eukaryotic initiation factor 2 (eIF2) complex gamma subunit. Its guanine nucleotide exchange factor activity is repressed when bound to eIF2 complex phosphorylated on the alpha subunit, thereby limiting the amount of methionyl-initiator methionine tRNA available to the ribosome and consequently global translation is repressed. The protein is Translation initiation factor eIF2B subunit gamma (EIF2B3) of Bos taurus (Bovine).